Here is a 341-residue protein sequence, read N- to C-terminus: MIKEAIGSLVLGKSLTLEQSASVMDEIMEGKTTPAQIGAFLTALRVKGETAEEIAGLANVMRAKSTRISTSTPVLDIVGIGGDGINTFNISTTAAFVISGAGIKVAKHGNRAASSMCGSADVLEALGIKIDLNAEQVKICIEQIGIGFMFAPVFHPAMKFVAPSRREIGIRTVFNILGPLTNPASAQYQLIGVPEIGLGDKIISALCHMDIKHALVVHGLDGMDEMSISGDSVIWELKDKEIIKFRHTVSPREMGLEQVSLQAVKGGAAEENALTLRAILSGAKGPKRDVVLLNAAAALMVADKIDTIAEGISLAAEIIDNGLALNKLESLIKLSQSLASG.

Residues Gly-79, 82–83, Thr-87, 89–92, 107–115, and Ser-119 contribute to the 5-phospho-alpha-D-ribose 1-diphosphate site; these read GD, NIST, and KHGNRAASS. Gly-79 is a binding site for anthranilate. Position 91 (Ser-91) interacts with Mg(2+). Asn-110 contacts anthranilate. Arg-165 is an anthranilate binding site. 2 residues coordinate Mg(2+): Asp-224 and Glu-225.

The protein belongs to the anthranilate phosphoribosyltransferase family. Homodimer. It depends on Mg(2+) as a cofactor.

It carries out the reaction N-(5-phospho-beta-D-ribosyl)anthranilate + diphosphate = 5-phospho-alpha-D-ribose 1-diphosphate + anthranilate. It functions in the pathway amino-acid biosynthesis; L-tryptophan biosynthesis; L-tryptophan from chorismate: step 2/5. Catalyzes the transfer of the phosphoribosyl group of 5-phosphorylribose-1-pyrophosphate (PRPP) to anthranilate to yield N-(5'-phosphoribosyl)-anthranilate (PRA). The protein is Anthranilate phosphoribosyltransferase of Dehalococcoides mccartyi (strain ATCC BAA-2266 / KCTC 15142 / 195) (Dehalococcoides ethenogenes (strain 195)).